The sequence spans 483 residues: Replication factor C large subunit (483 aa).

44–51 serves as a coordination point for ATP; the sequence is GSPGVGKT. The interval 415–483 is disordered; that stretch reads AVDHGGGIFA…DGQAGLSDFM (69 aa). The segment covering 430–443 has biased composition (acidic residues); the sequence is AQSDTESDDDDDGD. A compositionally biased stretch (basic and acidic residues) spans 451–463; sequence DEPKEESVNREQS.

This sequence belongs to the activator 1 small subunits family. RfcL subfamily. As to quaternary structure, heteromultimer composed of small subunits (RfcS) and large subunits (RfcL).

Functionally, part of the RFC clamp loader complex which loads the PCNA sliding clamp onto DNA. This is Replication factor C large subunit from Natronomonas pharaonis (strain ATCC 35678 / DSM 2160 / CIP 103997 / JCM 8858 / NBRC 14720 / NCIMB 2260 / Gabara) (Halobacterium pharaonis).